The following is a 366-amino-acid chain: Beta sliding clamp (366 aa).

The protein belongs to the beta sliding clamp family. As to quaternary structure, forms a ring-shaped head-to-tail homodimer around DNA which binds and tethers DNA polymerases and other proteins to the DNA. The DNA replisome complex has a single clamp-loading complex (3 tau and 1 each of delta, delta', psi and chi subunits) which binds 3 Pol III cores (1 core on the leading strand and 2 on the lagging strand) each with a beta sliding clamp dimer. Additional proteins in the replisome are other copies of gamma, psi and chi, Ssb, DNA helicase and RNA primase.

It is found in the cytoplasm. Functionally, confers DNA tethering and processivity to DNA polymerases and other proteins. Acts as a clamp, forming a ring around DNA (a reaction catalyzed by the clamp-loading complex) which diffuses in an ATP-independent manner freely and bidirectionally along dsDNA. Initially characterized for its ability to contact the catalytic subunit of DNA polymerase III (Pol III), a complex, multichain enzyme responsible for most of the replicative synthesis in bacteria; Pol III exhibits 3'-5' exonuclease proofreading activity. The beta chain is required for initiation of replication as well as for processivity of DNA replication. The sequence is that of Beta sliding clamp (dnaN) from Chlamydia pneumoniae (Chlamydophila pneumoniae).